Reading from the N-terminus, the 100-residue chain is Large ribosomal subunit protein uL23 (100 aa).

Belongs to the universal ribosomal protein uL23 family. As to quaternary structure, part of the 50S ribosomal subunit. Contacts protein L29, and trigger factor when it is bound to the ribosome.

One of the early assembly proteins it binds 23S rRNA. One of the proteins that surrounds the polypeptide exit tunnel on the outside of the ribosome. Forms the main docking site for trigger factor binding to the ribosome. The sequence is that of Large ribosomal subunit protein uL23 from Shewanella piezotolerans (strain WP3 / JCM 13877).